The chain runs to 200 residues: Protein GrpE (200 aa).

Belongs to the GrpE family. In terms of assembly, homodimer.

It is found in the cytoplasm. Its function is as follows. Participates actively in the response to hyperosmotic and heat shock by preventing the aggregation of stress-denatured proteins, in association with DnaK and GrpE. It is the nucleotide exchange factor for DnaK and may function as a thermosensor. Unfolded proteins bind initially to DnaJ; upon interaction with the DnaJ-bound protein, DnaK hydrolyzes its bound ATP, resulting in the formation of a stable complex. GrpE releases ADP from DnaK; ATP binding to DnaK triggers the release of the substrate protein, thus completing the reaction cycle. Several rounds of ATP-dependent interactions between DnaJ, DnaK and GrpE are required for fully efficient folding. In Mycoplasma mycoides subsp. mycoides SC (strain CCUG 32753 / NCTC 10114 / PG1), this protein is Protein GrpE.